A 192-amino-acid chain; its full sequence is Ribosome maturation factor RimP (192 aa).

Belongs to the RimP family.

Its subcellular location is the cytoplasm. Its function is as follows. Required for maturation of 30S ribosomal subunits. This Mycobacterium sp. (strain JLS) protein is Ribosome maturation factor RimP.